We begin with the raw amino-acid sequence, 118 residues long: NADPH-dependent 7-cyano-7-deazaguanine reductase (118 aa).

Cys34 (thioimide intermediate) is an active-site residue. Asp41 (proton donor) is an active-site residue. Residues 56-58 (VEL) and 75-76 (HE) each bind substrate.

The protein belongs to the GTP cyclohydrolase I family. QueF type 1 subfamily.

The protein resides in the cytoplasm. The enzyme catalyses 7-aminomethyl-7-carbaguanine + 2 NADP(+) = 7-cyano-7-deazaguanine + 2 NADPH + 3 H(+). Its pathway is tRNA modification; tRNA-queuosine biosynthesis. Functionally, catalyzes the NADPH-dependent reduction of 7-cyano-7-deazaguanine (preQ0) to 7-aminomethyl-7-deazaguanine (preQ1). The polypeptide is NADPH-dependent 7-cyano-7-deazaguanine reductase (Halorhodospira halophila (strain DSM 244 / SL1) (Ectothiorhodospira halophila (strain DSM 244 / SL1))).